The sequence spans 450 residues: Probable ECA polymerase (450 aa).

A run of 11 helical transmembrane segments spans residues Phe6 to Phe26, Val37 to Leu57, Val63 to Ala83, Val118 to Leu138, Gly155 to Leu175, Ala181 to Gly201, Ile207 to Trp227, Met228 to Tyr248, Leu341 to Ile361, Tyr378 to Ala398, and Val410 to Phe430.

Belongs to the WzyE family. As to quaternary structure, probably part of a complex composed of WzxE, WzyE and WzzE.

Its subcellular location is the cell inner membrane. It functions in the pathway bacterial outer membrane biogenesis; enterobacterial common antigen biosynthesis. Its function is as follows. Probably involved in the polymerization of enterobacterial common antigen (ECA) trisaccharide repeat units. The sequence is that of Probable ECA polymerase from Escherichia coli O127:H6 (strain E2348/69 / EPEC).